The following is a 60-amino-acid chain: Potassium channel toxin ImKTx88 (60 aa).

The signal sequence occupies residues 1-22; sequence MSNFSVFLIALLFCSVFILSEA. Intrachain disulfides connect C30–C51, C36–C56, and C40–C58.

Belongs to the short scorpion toxin superfamily. Potassium channel inhibitor family. As to expression, expressed by the venom gland.

It is found in the secreted. Its function is as follows. Recombinant toxin selectively inhibits Kv1.3/KCNA3 potassium channels with an IC(50) of 91 pM. The polypeptide is Potassium channel toxin ImKTx88 (Isometrus maculatus (Lesser brown scorpion)).